The sequence spans 113 residues: Replication initiation control protein YabA (113 aa).

The Zn(2+) site is built by His-88, Cys-90, Cys-104, and Cys-107.

This sequence belongs to the YabA family. Homotetramer. Interacts with both DnaA and DnaN, acting as a bridge between these two proteins. Zn(2+) is required as a cofactor.

It is found in the cytoplasm. The protein resides in the nucleoid. In terms of biological role, involved in control of chromosome replication initiation. Inhibits the cooperative binding of DnaA to the oriC region, thus negatively regulating initiation of chromosome replication. Inhibits the ability of DnaA-ATP to form a helix on DNA; does not disassemble preformed DnaA-DNA helices. Decreases the residence time of DnaA on the chromosome at its binding sites (oriC, replication forks and promoter-binding sites). Tethers DnaA to the replication machinery via the DNA polymerase beta sliding clamp subunit (dnaN). Associates with oriC and other DnaA targets on the chromosome in a DnaA-dependent manner. In Staphylococcus saprophyticus subsp. saprophyticus (strain ATCC 15305 / DSM 20229 / NCIMB 8711 / NCTC 7292 / S-41), this protein is Replication initiation control protein YabA.